A 91-amino-acid chain; its full sequence is Large ribosomal subunit protein eL43 (91 aa).

The C4-type zinc finger occupies 39–60; sequence CSFCGKDAVRRSSVGIWKCNGC.

This sequence belongs to the eukaryotic ribosomal protein eL43 family.

The polypeptide is Large ribosomal subunit protein eL43 (rpl37A) (Dictyostelium discoideum (Social amoeba)).